The primary structure comprises 1538 residues: Lysophospholipase nte1 (1538 aa).

Over 1 to 74 (MATDGGPLAA…PPPTPSTMAG (74 aa)) the chain is Cytoplasmic. Residues 75 to 95 (WFGWVFSFFFQVIPSVLYWVI) traverse the membrane as a helical segment. The Lumenal segment spans residues 96-117 (TFATITLPTWLFTLFSMSLTFT). The helical transmembrane segment at 118 to 138 (MNFTTLLLIALAIVSTISWFI) threads the bilayer. The Cytoplasmic portion of the chain corresponds to 139–1538 (RYRFLNMYSR…RTLAPRRASI (1400 aa)). 3 disordered regions span residues 242 to 264 (KPNV…DHRV), 302 to 393 (EGSS…KSVH), and 529 to 559 (AAQS…GDLL). Residues 302–314 (EGSSSSASSVGPS) show a composition bias toward low complexity. Basic and acidic residues predominate over residues 329-345 (GLEDSPRSNFVRDHGDS). A nucleoside 3',5'-cyclic phosphate is bound by residues 692–811 (GGTS…QGYV) and 856–976 (RLTS…IAQR). In terms of domain architecture, PNPLA spans 1235–1399 (LVLGGGGARG…IDNLTVTHMK (165 aa)). Positions 1239 to 1244 (GGGARG) match the GXGXXG motif. The GXSXG motif lies at 1266–1270 (GTSIG). The Nucleophile role is filled by serine 1268. Aspartate 1386 functions as the Proton acceptor in the catalytic mechanism. The DGA/G signature appears at 1386-1388 (DGG). The interval 1517–1538 (LPEETEEKKKLQRTLAPRRASI) is disordered.

Belongs to the NTE family.

It localises to the endoplasmic reticulum membrane. It catalyses the reaction a 1-acyl-sn-glycero-3-phosphocholine + H2O = sn-glycerol 3-phosphocholine + a fatty acid + H(+). With respect to regulation, inhibited by organophosphorus esters. Its function is as follows. Intracellular phospholipase B that catalyzes the double deacylation of phosphatidylcholine (PC) to glycerophosphocholine (GroPCho). Plays an important role in membrane lipid homeostasis. Responsible for the rapid PC turnover in response to inositol, elevated temperatures, or when choline is present in the growth medium. The sequence is that of Lysophospholipase nte1 (nte1) from Aspergillus oryzae (strain ATCC 42149 / RIB 40) (Yellow koji mold).